Here is a 130-residue protein sequence, read N- to C-terminus: MTRSSVLADALNAINNAEKTGKRQVLIRPSSKVIIKFLQVMQRHGYIGEFEYIDDHRSGKIVVQLNGRLNKCGVISPRFNVKIGDIEKWTANLLPARQFGYVILTTSAGIMDHEEARRKHVSGKILGFVY.

It belongs to the universal ribosomal protein uS8 family.

The polypeptide is Small ribosomal subunit protein uS8 (RPS22) (Candida glabrata (strain ATCC 2001 / BCRC 20586 / JCM 3761 / NBRC 0622 / NRRL Y-65 / CBS 138) (Yeast)).